The primary structure comprises 96 residues: Ferredoxin (96 aa).

A 2Fe-2S ferredoxin-type domain is found at 4 to 94 (YKVKLLTPEG…DVVIETHKEE (91 aa)). [2Fe-2S] cluster contacts are provided by Cys-40, Cys-45, Cys-48, and Cys-78.

It belongs to the 2Fe2S plant-type ferredoxin family. [2Fe-2S] cluster serves as cofactor.

It is found in the plastid. Its subcellular location is the chloroplast. Its function is as follows. Ferredoxins are iron-sulfur proteins that transfer electrons in a wide variety of metabolic reactions. This chain is Ferredoxin, found in Panax ginseng (Korean ginseng).